Consider the following 506-residue polypeptide: Histidine ammonia-lyase (506 aa).

A cross-link (5-imidazolinone (Ala-Gly)) is located at residues A143 to G145. At S144 the chain carries 2,3-didehydroalanine (Ser).

Belongs to the PAL/histidase family. In terms of processing, contains an active site 4-methylidene-imidazol-5-one (MIO), which is formed autocatalytically by cyclization and dehydration of residues Ala-Ser-Gly.

The protein resides in the cytoplasm. It carries out the reaction L-histidine = trans-urocanate + NH4(+). The protein operates within amino-acid degradation; L-histidine degradation into L-glutamate; N-formimidoyl-L-glutamate from L-histidine: step 1/3. This chain is Histidine ammonia-lyase, found in Enterobacter sp. (strain 638).